The chain runs to 133 residues: ATP synthase epsilon chain (133 aa).

It belongs to the ATPase epsilon chain family. F-type ATPases have 2 components, CF(1) - the catalytic core - and CF(0) - the membrane proton channel. CF(1) has five subunits: alpha(3), beta(3), gamma(1), delta(1), epsilon(1). CF(0) has three main subunits: a, b and c.

Its subcellular location is the cell inner membrane. Its function is as follows. Produces ATP from ADP in the presence of a proton gradient across the membrane. The chain is ATP synthase epsilon chain from Desulfosudis oleivorans (strain DSM 6200 / JCM 39069 / Hxd3) (Desulfococcus oleovorans).